The primary structure comprises 190 residues: Holliday junction branch migration complex subunit RuvA (190 aa).

A domain I region spans residues M1–L64. Residues D65 to I142 are domain II. A region of interest (flexible linker) is located at residue K143. The segment at K143–Q190 is domain III.

It belongs to the RuvA family. As to quaternary structure, homotetramer. Forms an RuvA(8)-RuvB(12)-Holliday junction (HJ) complex. HJ DNA is sandwiched between 2 RuvA tetramers; dsDNA enters through RuvA and exits via RuvB. An RuvB hexamer assembles on each DNA strand where it exits the tetramer. Each RuvB hexamer is contacted by two RuvA subunits (via domain III) on 2 adjacent RuvB subunits; this complex drives branch migration. In the full resolvosome a probable DNA-RuvA(4)-RuvB(12)-RuvC(2) complex forms which resolves the HJ.

The protein localises to the cytoplasm. Its function is as follows. The RuvA-RuvB-RuvC complex processes Holliday junction (HJ) DNA during genetic recombination and DNA repair, while the RuvA-RuvB complex plays an important role in the rescue of blocked DNA replication forks via replication fork reversal (RFR). RuvA specifically binds to HJ cruciform DNA, conferring on it an open structure. The RuvB hexamer acts as an ATP-dependent pump, pulling dsDNA into and through the RuvAB complex. HJ branch migration allows RuvC to scan DNA until it finds its consensus sequence, where it cleaves and resolves the cruciform DNA. The chain is Holliday junction branch migration complex subunit RuvA from Ehrlichia chaffeensis (strain ATCC CRL-10679 / Arkansas).